Here is a 468-residue protein sequence, read N- to C-terminus: Cell division protein FtsA (468 aa).

Residues 416-468 (NKKDTHENEVESSDEEIYQSEDNHQEHKQNHEHVQDKDKEESKFKKLMKSLFE) form a disordered region. The span at 425–434 (VESSDEEIYQ) shows a compositional bias: acidic residues. Over residues 436–459 (EDNHQEHKQNHEHVQDKDKEESKF) the composition is skewed to basic and acidic residues.

It belongs to the FtsA/MreB family. In terms of assembly, self-interacts. Interacts with FtsZ.

The protein localises to the cell membrane. Its function is as follows. Cell division protein that is involved in the assembly of the Z ring. May serve as a membrane anchor for the Z ring. The protein is Cell division protein FtsA of Staphylococcus aureus (strain MRSA252).